The chain runs to 368 residues: Repressor ROX1 (368 aa).

Residues 10-83 constitute a DNA-binding region (HMG box); it reads IPRPKNAFIL…EHERKYPEYK (74 aa). Disordered stretches follow at residues 100–121 and 242–273; these read IEQQ…QPQL and SSQT…SSVL. Over residues 102 to 121 the composition is skewed to low complexity; sequence QQQQQQQKEQQQQKQSQPQL.

It localises to the nucleus. In terms of biological role, transcription factor that represses the expression of HEM13, COX5B, ANB1, CYC7 or AAC3 (hypoxic function). Binds to the DNA sequence 5'-RRRTAACAAGAG-3'. The protein is Repressor ROX1 (ROX1) of Saccharomyces cerevisiae (strain ATCC 204508 / S288c) (Baker's yeast).